The chain runs to 791 residues: Endonuclease MutS2 (791 aa).

337-344 contributes to the ATP binding site; that stretch reads GPNTGGKT. Residues 689 to 715 form a disordered region; that stretch reads AAQASQKKPEKSVRSSRGLRSSRASSE. The span at 703 to 713 shows a compositional bias: low complexity; that stretch reads SSRGLRSSRAS. Positions 716–791 constitute a Smr domain; the sequence is LDLRGQRYEE…GTGATIVNLQ (76 aa).

The protein belongs to the DNA mismatch repair MutS family. MutS2 subfamily. As to quaternary structure, homodimer. Binds to stalled ribosomes, contacting rRNA.

Functionally, endonuclease that is involved in the suppression of homologous recombination and thus may have a key role in the control of bacterial genetic diversity. Acts as a ribosome collision sensor, splitting the ribosome into its 2 subunits. Detects stalled/collided 70S ribosomes which it binds and splits by an ATP-hydrolysis driven conformational change. Acts upstream of the ribosome quality control system (RQC), a ribosome-associated complex that mediates the extraction of incompletely synthesized nascent chains from stalled ribosomes and their subsequent degradation. Probably generates substrates for RQC. The chain is Endonuclease MutS2 from Lactobacillus gasseri (strain ATCC 33323 / DSM 20243 / BCRC 14619 / CIP 102991 / JCM 1131 / KCTC 3163 / NCIMB 11718 / NCTC 13722 / AM63).